The chain runs to 106 residues: UPF0213 protein VPA1222 (106 aa).

Positions 7–82 (QHWSVYLIRN…KQLTKSKKEQ (76 aa)) constitute a GIY-YIG domain.

Belongs to the UPF0213 family.

In Vibrio parahaemolyticus serotype O3:K6 (strain RIMD 2210633), this protein is UPF0213 protein VPA1222.